The chain runs to 334 residues: D-alanine--D-alanine ligase (334 aa).

The ATP-grasp domain maps to 124 to 329 (KMWFSALGIP…FAQYLSGNIL (206 aa)). 154 to 209 (ALAKWGSIFIKAASQGSSVGCYRVDSIEQLASSLEEAFTFSPYVVIEKTITARELE) is an ATP binding site. Mg(2+) is bound by residues Asp283, Glu296, and Asn298.

This sequence belongs to the D-alanine--D-alanine ligase family. It depends on Mg(2+) as a cofactor. Mn(2+) serves as cofactor.

Its subcellular location is the cytoplasm. It catalyses the reaction 2 D-alanine + ATP = D-alanyl-D-alanine + ADP + phosphate + H(+). The protein operates within cell wall biogenesis; peptidoglycan biosynthesis. In terms of biological role, cell wall formation. The chain is D-alanine--D-alanine ligase from Shewanella pealeana (strain ATCC 700345 / ANG-SQ1).